The sequence spans 68 residues: Disintegrin EMF10B (68 aa).

The 68-residue stretch at 1–68 (ELLQNSGNPC…SDCPRNPVFK (68 aa)) folds into the Disintegrin domain. 4 cysteine pairs are disulfide-bonded: Cys10–Cys33, Cys24–Cys30, Cys29–Cys54, and Cys42–Cys61. A Cell attachment site; atypical (MGD) motif is present at residues 46–48 (MGD).

Belongs to the venom metalloproteinase (M12B) family. P-II subfamily. P-IIe sub-subfamily. In terms of assembly, heterodimer with EMF10A; disulfide-linked. As to expression, expressed by the venom gland.

It localises to the secreted. In terms of biological role, extremely potent and selective inhibitor of integrin alpha-5/beta-1 (ITGA5/ITGB1). Partially inhibits adhesion of cells expressing alpha-IIb/beta-3 (ITGA2B/ITGB3), alpha-V/beta-3 (ITGAV/ITGB3), and alpha-4/beta-1 (ITGA4/ITGB1) to appropriate ligands only at concentration higher than 500 nM. Weakly inhibits ADP-induced platelet aggregation. The protein is Disintegrin EMF10B of Eristicophis macmahoni (Leaf-nosed viper).